The primary structure comprises 1764 residues: Cilia- and flagella-associated protein 44 (1764 aa).

WD repeat units lie at residues 115 to 157, 160 to 199, 208 to 248, 255 to 294, 361 to 400, 454 to 493, and 495 to 534; these read GTER…IVLR, AFSQ…TGLK, GNVE…VVLT, CHDG…DAEP, HPAG…VLAE, AHKG…QPGT, and VPGM…GVLL. The disordered stretch occupies residues 570–654; that stretch reads QLVVPKPKRP…GGPSSTTGEL (85 aa). Positions 575–584 are enriched in basic residues; it reads KPKRPKKKKG. 2 stretches are compositionally biased toward basic and acidic residues: residues 585–596 and 604–628; these read KNDGEEGDKEGG and GEDK…GRAA. The span at 629–641 shows a compositional bias: acidic residues; that stretch reads EEEEEEEADDEAD. WD repeat units lie at residues 649–692, 707–752, and 753–791; these read STTG…PLAA, AHAG…LHDM, and QSGR…ELAP. Positions 821–850 form a coiled coil; the sequence is YTLEEEKQQAERDQQVREAEEKKLSVRQRL. Disordered regions lie at residues 972–1003 and 1426–1468; these read AAAG…GDAA and KKKA…CPPG. Positions 1434–1462 are enriched in acidic residues; that stretch reads GEDDYDSEEDEEDEDMGDDEVDDDDDGGE. Coiled coils occupy residues 1479 to 1517, 1567 to 1674, and 1729 to 1758; these read DLRE…LVEQ, LVFS…DAKI, and EERD…LRRK.

Belongs to the CFAP44 family.

It is found in the cell projection. The protein resides in the cilium. The protein localises to the flagellum. It localises to the cytoplasm. Its subcellular location is the cytoskeleton. It is found in the flagellum axoneme. Functionally, flagellar protein involved in sperm flagellum axoneme organization and function. In Chlamydomonas reinhardtii (Chlamydomonas smithii), this protein is Cilia- and flagella-associated protein 44.